Consider the following 423-residue polypeptide: Histidine--tRNA ligase (423 aa).

It belongs to the class-II aminoacyl-tRNA synthetase family. In terms of assembly, homodimer.

Its subcellular location is the cytoplasm. The catalysed reaction is tRNA(His) + L-histidine + ATP = L-histidyl-tRNA(His) + AMP + diphosphate + H(+). This is Histidine--tRNA ligase from Staphylococcus haemolyticus (strain JCSC1435).